The chain runs to 914 residues: TRPM8 channel-associated factor 3 (914 aa).

In terms of domain architecture, Peptidase M60 spans 533–832; the sequence is NSWVSTGLYL…TYLQLQEGFG (300 aa).

Belongs to the TCAF family.

May play a role in the regulation of the cation channel TRPM8 activity. The protein is TRPM8 channel-associated factor 3 of Rattus norvegicus (Rat).